Consider the following 476-residue polypeptide: H2.0-like homeobox protein (476 aa).

3 disordered regions span residues 121–170 (HLPQ…SSKD), 328–401 (WRHS…HQTT), and 413–476 (TASS…LAGL). Over residues 158–168 (HHSGSAPAPSS) the composition is skewed to low complexity. The homeobox DNA-binding region spans 273–332 (RSWSRAVFSNLQRKGLEKRFEIQKYVTKPDRKQLAAMLGLTDAQVKVWFQNRRMKWRHSK). Composition is skewed to basic and acidic residues over residues 331 to 346 (SKEAQAQKDKDKEAGE) and 355 to 368 (EGEREERSPSRSEG). Positions 369–379 (EAESESSDSES) are enriched in acidic residues. Residues 386–397 (DTERTEGTERSL) are compositionally biased toward basic and acidic residues. Positions 413–446 (TASSSASGSSFSFSSSSSLGSSNGSAGSASSLGS) are enriched in low complexity. Over residues 455-464 (HQPSVTSGPQ) the composition is skewed to polar residues.

The protein belongs to the H2.0 homeobox family.

Its subcellular location is the nucleus. In terms of biological role, transcription factor required for TBX21/T-bet-dependent maturation of Th1 cells as well as maintenance of Th1-specific gene expression. Involved in embryogenesis and hematopoiesis. The polypeptide is H2.0-like homeobox protein (Hlx) (Rattus norvegicus (Rat)).